A 95-amino-acid polypeptide reads, in one-letter code: Cobalt transport protein CbiN (95 aa).

2 helical membrane passes run 5–25 (HILM…IYSG) and 67–87 (LLFA…FGYY).

The protein belongs to the CbiN family. In terms of assembly, forms an energy-coupling factor (ECF) transporter complex composed of an ATP-binding protein (A component, CbiO), a transmembrane protein (T component, CbiQ) and 2 possible substrate-capture proteins (S components, CbiM and CbiN) of unknown stoichimetry.

It is found in the cell membrane. It functions in the pathway cofactor biosynthesis; adenosylcobalamin biosynthesis. In terms of biological role, part of the energy-coupling factor (ECF) transporter complex CbiMNOQ involved in cobalt import. The polypeptide is Cobalt transport protein CbiN (Methanothermobacter thermautotrophicus (strain ATCC 29096 / DSM 1053 / JCM 10044 / NBRC 100330 / Delta H) (Methanobacterium thermoautotrophicum)).